The chain runs to 48 residues: Large ribosomal subunit protein eL40 (48 aa).

Belongs to the eukaryotic ribosomal protein eL40 family.

The protein is Large ribosomal subunit protein eL40 of Methanocella arvoryzae (strain DSM 22066 / NBRC 105507 / MRE50).